The following is a 596-amino-acid chain: Bromodomain-containing protein 9 (596 aa).

Basic residues predominate over residues 1-10 (MGKKHKKHKA). Disordered regions lie at residues 1–26 (MGKK…PLEK) and 38–137 (EVTE…AENE). The segment covering 50 to 62 (SYYDDRSDHERER) has biased composition (basic and acidic residues). Phosphoserine is present on serine 56. Residues 63–73 (HREKKKKKKKK) are compositionally biased toward basic residues. The span at 74 to 85 (SEKEKHLDEEER) shows a compositional bias: basic and acidic residues. Residues 86-97 (RKRKEEKKRKRE) show a composition bias toward basic residues. Positions 111 to 126 (DPGKKVEVEPPPDRPV) are enriched in basic and acidic residues. Residues 136–240 (NESTPIQRLL…HAGFKMMSKA (105 aa)) form the Bromo domain. Residues 214–216 (TYN) form a histone H4K5ac H4K8ac and histone H4K5bu H4K8bu binding region. Lysine 372 carries the N6-acetyllysine; alternate modification. Residue lysine 372 forms a Glycyl lysine isopeptide (Lys-Gly) (interchain with G-Cter in SUMO2); alternate linkage. The tract at residues 536–596 (AQAERGGSRP…SPEPAAPAKN (61 aa)) is disordered. Residues 543-555 (SRPSSNLSSLSTA) show a composition bias toward low complexity. A phosphoserine mark is found at serine 565 and serine 587.

As to quaternary structure, binds acetylated histones H3 and H4. Binds butyrylated histone H4. Component of the multiprotein chromatin-remodeling subcomplex SWI/SNF called GBAF, which includes at least BICRA or BICRAL (mutually exclusive), BRD9, SS18, the core BAF subunits, SMARCA2/BRM, SMARCA4/BRG1/BAF190A, ACTL6A/BAF53, SMARCC1/BAF155, and SMARCD1/BAF60A. Interacts (via N-terminal bromodomain) with acetylated RAD54. Interacts (via C-terminus) with RAD51.

It localises to the nucleus. Plays a role in chromatin remodeling and regulation of transcription. Acts as a chromatin reader that recognizes and binds acylated histones: binds histones that are acetylated and/or butyrylated. Component of SWI/SNF chromatin remodeling subcomplex GBAF that carries out key enzymatic activities, changing chromatin structure by altering DNA-histone contacts within a nucleosome in an ATP-dependent manner. Also orchestrates the RAD51-RAD54 complex formation and thereby plays a role in homologous recombination (HR). The protein is Bromodomain-containing protein 9 (Brd9) of Mus musculus (Mouse).